The chain runs to 497 residues: Phenylalanine--tRNA ligase alpha subunit (497 aa).

L-phenylalanine is bound by residues Thr-329, 372–374 (QIE), and Tyr-412. Glu-414 provides a ligand contact to Mg(2+). Phe-438 serves as a coordination point for L-phenylalanine.

The protein belongs to the class-II aminoacyl-tRNA synthetase family. Phe-tRNA synthetase alpha subunit type 2 subfamily. As to quaternary structure, heterotetramer; dimer of two heterodimers formed by alpha and beta subunits. It depends on Mg(2+) as a cofactor.

The protein resides in the cytoplasm. It carries out the reaction tRNA(Phe) + L-phenylalanine + ATP = L-phenylalanyl-tRNA(Phe) + AMP + diphosphate + H(+). The polypeptide is Phenylalanine--tRNA ligase alpha subunit (farsa) (Danio rerio (Zebrafish)).